The chain runs to 134 residues: Small ribosomal subunit protein uS11 (134 aa).

Belongs to the universal ribosomal protein uS11 family. Part of the 30S ribosomal subunit. Interacts with proteins S7 and S18. Binds to IF-3.

Its function is as follows. Located on the platform of the 30S subunit, it bridges several disparate RNA helices of the 16S rRNA. Forms part of the Shine-Dalgarno cleft in the 70S ribosome. This chain is Small ribosomal subunit protein uS11, found in Polaromonas sp. (strain JS666 / ATCC BAA-500).